The chain runs to 59 residues: Cecropin-A1 (59 aa).

The first 23 residues, 1-23 (MNFTKLFAIVLLAALVLLGQTEA), serve as a signal peptide directing secretion.

Belongs to the cecropin family.

It is found in the secreted. Functionally, cecropins have lytic and antibacterial activity against several Gram-positive and Gram-negative bacteria. The polypeptide is Cecropin-A1 (CECA1) (Aedes albopictus (Asian tiger mosquito)).